A 712-amino-acid chain; its full sequence is Polyribonucleotide nucleotidyltransferase (712 aa).

Mg(2+)-binding residues include D485 and D491. Residues 552–611 form the KH domain; that stretch reads PRIHTMKIDPKKIKDVIGKGGAVIRSLTEETGTSIDIDDDGTVKIAATDNNAAKMVMSRI. Residues 621–689 enclose the S1 motif domain; that stretch reads NAIYTGKVSR…RQNRIRLTMK (69 aa).

It belongs to the polyribonucleotide nucleotidyltransferase family. In terms of assembly, component of the RNA degradosome, which is a multiprotein complex involved in RNA processing and mRNA degradation. The cofactor is Mg(2+).

The protein localises to the cytoplasm. It carries out the reaction RNA(n+1) + phosphate = RNA(n) + a ribonucleoside 5'-diphosphate. Involved in mRNA degradation. Catalyzes the phosphorolysis of single-stranded polyribonucleotides processively in the 3'- to 5'-direction. This chain is Polyribonucleotide nucleotidyltransferase, found in Haemophilus ducreyi (strain 35000HP / ATCC 700724).